A 639-amino-acid chain; its full sequence is Probable potassium transport system protein Kup 1 (639 aa).

The next 12 helical transmembrane spans lie at Ala27–Phe47, Val64–Ile84, Val115–Pro135, Pro151–Ile171, Phe182–Ile202, Gly225–Leu245, Trp261–Leu281, Leu293–Ile313, Ile351–Phe371, Leu377–Phe397, Ile408–Ala428, and Leu430–Ile450.

It belongs to the HAK/KUP transporter (TC 2.A.72) family.

It is found in the cell inner membrane. The catalysed reaction is K(+)(in) + H(+)(in) = K(+)(out) + H(+)(out). In terms of biological role, transport of potassium into the cell. Likely operates as a K(+):H(+) symporter. The polypeptide is Probable potassium transport system protein Kup 1 (Agrobacterium fabrum (strain C58 / ATCC 33970) (Agrobacterium tumefaciens (strain C58))).